A 253-amino-acid chain; its full sequence is Probable transcriptional regulatory protein Mmar10_2433 (253 aa).

The protein belongs to the TACO1 family.

The protein resides in the cytoplasm. This is Probable transcriptional regulatory protein Mmar10_2433 from Maricaulis maris (strain MCS10) (Caulobacter maris).